A 768-amino-acid polypeptide reads, in one-letter code: DNA ligase (768 aa).

NAD(+) contacts are provided by residues 61–65 (DAEFD), 110–111 (SL), and Glu146. Residue Lys148 is the N6-AMP-lysine intermediate of the active site. Residues Arg169, Glu206, Lys322, and Lys346 each contribute to the NAD(+) site. Residues Cys443, Cys446, Cys462, and Cys468 each coordinate Zn(2+). The region spanning 661-750 (SVPRTLEGLT…PAQTGTEAEA (90 aa)) is the BRCT domain. The tract at residues 739 to 768 (NGPAQTGTEAEAATDEATVVDETAAEAATE) is disordered. Positions 746–768 (TEAEAATDEATVVDETAAEAATE) are enriched in low complexity.

Belongs to the NAD-dependent DNA ligase family. LigA subfamily. Mg(2+) is required as a cofactor. The cofactor is Mn(2+).

The catalysed reaction is NAD(+) + (deoxyribonucleotide)n-3'-hydroxyl + 5'-phospho-(deoxyribonucleotide)m = (deoxyribonucleotide)n+m + AMP + beta-nicotinamide D-nucleotide.. Functionally, DNA ligase that catalyzes the formation of phosphodiester linkages between 5'-phosphoryl and 3'-hydroxyl groups in double-stranded DNA using NAD as a coenzyme and as the energy source for the reaction. It is essential for DNA replication and repair of damaged DNA. This is DNA ligase from Paenarthrobacter aurescens (strain TC1).